Reading from the N-terminus, the 461-residue chain is Photosystem II CP43 reaction center protein (461 aa).

Positions 1 to 2 are excised as a propeptide; that stretch reads ME. Threonine 3 is subject to N-acetylthreonine. Threonine 3 carries the phosphothreonine modification. The next 5 helical transmembrane spans lie at 57–81, 122–143, 166–188, 243–263, and 279–300; these read LFEV…PHLA, LLGP…KDRN, KALY…RKIT, KPFA…LSYS, and WFNN…ASQA. Glutamate 355 lines the [CaMn4O5] cluster pocket. Residues 435–459 traverse the membrane as a helical segment; that stretch reads RARAAAAGFEKGIDRDFEPVLSMTP.

It belongs to the PsbB/PsbC family. PsbC subfamily. PSII is composed of 1 copy each of membrane proteins PsbA, PsbB, PsbC, PsbD, PsbE, PsbF, PsbH, PsbI, PsbJ, PsbK, PsbL, PsbM, PsbT, PsbX, PsbY, PsbZ, Psb30/Ycf12, at least 3 peripheral proteins of the oxygen-evolving complex and a large number of cofactors. It forms dimeric complexes. Requires Binds multiple chlorophylls and provides some of the ligands for the Ca-4Mn-5O cluster of the oxygen-evolving complex. It may also provide a ligand for a Cl- that is required for oxygen evolution. PSII binds additional chlorophylls, carotenoids and specific lipids. as cofactor.

It is found in the plastid. The protein localises to the chloroplast thylakoid membrane. Its function is as follows. One of the components of the core complex of photosystem II (PSII). It binds chlorophyll and helps catalyze the primary light-induced photochemical processes of PSII. PSII is a light-driven water:plastoquinone oxidoreductase, using light energy to abstract electrons from H(2)O, generating O(2) and a proton gradient subsequently used for ATP formation. The chain is Photosystem II CP43 reaction center protein from Gossypium barbadense (Sea Island cotton).